Here is an 837-residue protein sequence, read N- to C-terminus: Tuftelin-interacting protein 11 (837 aa).

2 stretches are compositionally biased toward basic and acidic residues: residues 1 to 13 (MSLSHLYRDGEGR) and 53 to 64 (VWAERDSDDERP). 3 disordered regions span residues 1–21 (MSLSHLYRDGEGRIDDDDDER), 53–72 (VWAERDSDDERPSFGGKRAR), and 85–133 (LKKG…KGFA). The interval 1–50 (MSLSHLYRDGEGRIDDDDDERENFEITDWDLQNEFNPNRQRHWQTKEEAT) is required for interaction with DHX15. Phosphoserine occurs at positions 2, 59, and 98. Residues 91 to 102 (EEAELEDSDDEE) are compositionally biased toward acidic residues. Residues 103-116 (RPVKQDDFPKDFGP) are compositionally biased toward basic and acidic residues. Ser144 is modified (phosphoserine). The 47-residue stretch at 149-195 (TKGIGQKLLQKMGYVPGRGLGKNAQGIINPIEAKQRKGKGAVGAYGS) folds into the G-patch domain. The disordered stretch occupies residues 179–236 (IEAKQRKGKGAVGAYGSERTTQSMQDFPVVDSEEEAEEEFQKELSQWRKDPSGSKKKP). Ser210 bears the Phosphoserine mark. Basic and acidic residues predominate over residues 217 to 231 (EFQKELSQWRKDPSG). Residues 700–705 (VKDKFN) carry the Nuclear localization signal motif. Residues 710–734 (IMNRAVSSNVGAYMQPGARENIAYL) are required for nuclear speckle localization.

It belongs to the TFP11/STIP family. Identified in the spliceosome C complex. Found in the Intron Large (IL) complex, a post-mRNA release spliceosomal complex containing the excised intron, U2, U5 and U6 snRNPs, and splicing factors. Interacts with TUFT1. Interacts with DHX15; indicative for a recruitment of DHX15 to the IL complex. Interacts with GCFC2.

The protein localises to the cytoplasm. It is found in the nucleus. Functionally, involved in pre-mRNA splicing, specifically in spliceosome disassembly during late-stage splicing events. Intron turnover seems to proceed through reactions in two lariat-intron associated complexes termed Intron Large (IL) and Intron Small (IS). In cooperation with DHX15 seems to mediate the transition of the U2, U5 and U6 snRNP-containing IL complex to the snRNP-free IS complex leading to efficient debranching and turnover of excised introns. May play a role in the differentiation of ameloblasts and odontoblasts or in the forming of the enamel extracellular matrix. In Macaca mulatta (Rhesus macaque), this protein is Tuftelin-interacting protein 11 (TFIP11).